The sequence spans 308 residues: Tryptophan 2,3-dioxygenase (308 aa).

A disordered region spans residues 1–35 (MQPPGDNAPAGCPFSGAHAAQPAHEAPHVPGDAAG). Positions 17 to 30 (AHAAQPAHEAPHVP) are enriched in low complexity. Substrate-binding positions include 77–81 (FIIQH), Tyr139, and Arg143. Position 266 (His266) interacts with heme. Residue Thr280 participates in substrate binding.

It belongs to the tryptophan 2,3-dioxygenase family. In terms of assembly, homotetramer. Requires heme as cofactor.

It carries out the reaction L-tryptophan + O2 = N-formyl-L-kynurenine. Its pathway is amino-acid degradation; L-tryptophan degradation via kynurenine pathway; L-kynurenine from L-tryptophan: step 1/2. In terms of biological role, heme-dependent dioxygenase that catalyzes the oxidative cleavage of the L-tryptophan (L-Trp) pyrrole ring and converts L-tryptophan to N-formyl-L-kynurenine. Catalyzes the oxidative cleavage of the indole moiety. This chain is Tryptophan 2,3-dioxygenase, found in Burkholderia ambifaria (strain ATCC BAA-244 / DSM 16087 / CCUG 44356 / LMG 19182 / AMMD) (Burkholderia cepacia (strain AMMD)).